Consider the following 155-residue polypeptide: Ferredoxin-6, chloroplastic (155 aa).

A chloroplast-targeting transit peptide spans 1–58 (MSTATAPRLPAPRSGASYHYQTTAAPAANTLSFAGHARQAARASGPRLSSRFVASAAA). The 2Fe-2S ferredoxin-type domain maps to 61–152 (HKVKLVGPDG…DCVIHTHKEE (92 aa)). [2Fe-2S] cluster is bound by residues Cys-98, Cys-103, Cys-106, and Cys-136.

Belongs to the 2Fe2S plant-type ferredoxin family. The cofactor is [2Fe-2S] cluster.

The protein resides in the plastid. Its subcellular location is the chloroplast. Ferredoxins are iron-sulfur proteins that transfer electrons in a wide variety of metabolic reactions. This Zea mays (Maize) protein is Ferredoxin-6, chloroplastic (FDX6).